The following is a 683-amino-acid chain: DNA ligase (683 aa).

NAD(+) is bound by residues D42 to D46, S91 to L92, and E122. The active-site N6-AMP-lysine intermediate is the K124. NAD(+) is bound by residues R145, E182, K299, and K323. Zn(2+) contacts are provided by C417, C420, C435, and C441. The region spanning A602–T683 is the BRCT domain.

It belongs to the NAD-dependent DNA ligase family. LigA subfamily. Mg(2+) serves as cofactor. Mn(2+) is required as a cofactor.

The catalysed reaction is NAD(+) + (deoxyribonucleotide)n-3'-hydroxyl + 5'-phospho-(deoxyribonucleotide)m = (deoxyribonucleotide)n+m + AMP + beta-nicotinamide D-nucleotide.. DNA ligase that catalyzes the formation of phosphodiester linkages between 5'-phosphoryl and 3'-hydroxyl groups in double-stranded DNA using NAD as a coenzyme and as the energy source for the reaction. It is essential for DNA replication and repair of damaged DNA. This Paraburkholderia phymatum (strain DSM 17167 / CIP 108236 / LMG 21445 / STM815) (Burkholderia phymatum) protein is DNA ligase.